The following is a 100-amino-acid chain: MIPLSHGLILAFFLFSLGFVSLVMHKNILFMLISLEIMINSAALALVVVGNYWNQVDGQIMYILILTLGASESSIGLALLIQCYRHFKTLNIDKLSEMNG.

Transmembrane regions (helical) follow at residues 4–24, 28–48, and 60–80; these read LSHG…SLVM, ILFM…ALVV, and IMYI…LALL.

This sequence belongs to the complex I subunit 4L family. As to quaternary structure, NDH-1 is composed of 13 different subunits. Subunits NuoA, H, J, K, L, M, N constitute the membrane sector of the complex.

It localises to the cell membrane. It carries out the reaction a quinone + NADH + 5 H(+)(in) = a quinol + NAD(+) + 4 H(+)(out). Its function is as follows. NDH-1 shuttles electrons from NADH, via FMN and iron-sulfur (Fe-S) centers, to quinones in the respiratory chain. The immediate electron acceptor for the enzyme in this species is believed to be ubiquinone. Couples the redox reaction to proton translocation (for every two electrons transferred, four hydrogen ions are translocated across the cytoplasmic membrane), and thus conserves the redox energy in a proton gradient. This chain is NADH-quinone oxidoreductase subunit K, found in Buchnera aphidicola subsp. Baizongia pistaciae (strain Bp).